Here is a 602-residue protein sequence, read N- to C-terminus: MTNAAGSSSALQNRFRTHYCGSLGPVLQQEKVSLAGWVHRIRDHGGLVFIDLRDHTGICQLVIQPEEKELFEQASHLHAESVIAIEGSVVLRSPETVNARLASGAIEVVVSALTVESNARPLPFPVADELPTSEELRLKYRFIDLRREKIHENIIFRSRVSSAIRRYLEERDFVEIQTPILTSSSPEGARDFLVPSRLHPGKFYALPQAPQQFKQLLMVAGFPRYFQIAPCFRDEDARADRSPGEFYQLDMEMAFIEQDDLFEILEGMFRHLVTSMSKKRITAFPFPRISYRDVMNRFGTDKPDLRIPLEIADVTPLFVNSGFKVFAANTKEGCAVKALVLKGRGTESRLFYDKAEKRAKELGSAGLAYIQFREEGLKGPIVKFMSEGEIASMKEQLSLETGDVVFFAAGKWEAACRIMGGMRTYFGELFTLDHDELSFCWIVDFPMYEYNEEAGKIDFSHNPFSMPQGEMEALETMDPLELLAYQYDIVCNGIELSSGAIRNHRPDIMYRAFEIAGYSKEDVDLRFGHMIEAFKLGAPPHGGIAPGLDRLVMILRDEQNIREVIAFPMNQQAEDLMMSAPSEVTTAQLRELHIKLDLPKED.

Residue Glu187 participates in L-aspartate binding. Positions 211–214 (QQFK) are aspartate. L-aspartate contacts are provided by Arg233 and His461. Position 233–235 (233–235 (RDE)) interacts with ATP. Residue Glu495 coordinates ATP. Arg502 serves as a coordination point for L-aspartate. 547–550 (GLDR) serves as a coordination point for ATP.

The protein belongs to the class-II aminoacyl-tRNA synthetase family. Type 1 subfamily. As to quaternary structure, homodimer.

Its subcellular location is the cytoplasm. It catalyses the reaction tRNA(Asx) + L-aspartate + ATP = L-aspartyl-tRNA(Asx) + AMP + diphosphate. Its function is as follows. Aspartyl-tRNA synthetase with relaxed tRNA specificity since it is able to aspartylate not only its cognate tRNA(Asp) but also tRNA(Asn). Reaction proceeds in two steps: L-aspartate is first activated by ATP to form Asp-AMP and then transferred to the acceptor end of tRNA(Asp/Asn). The chain is Aspartate--tRNA(Asp/Asn) ligase from Chlorobium phaeovibrioides (strain DSM 265 / 1930) (Prosthecochloris vibrioformis (strain DSM 265)).